We begin with the raw amino-acid sequence, 304 residues long: Acetyl-coenzyme A carboxylase carboxyl transferase subunit beta (304 aa).

Positions 23-292 constitute a CoA carboxyltransferase N-terminal domain; the sequence is VWTKCDSCGQ…PNPEAPREGV (270 aa). C27, C30, C46, and C49 together coordinate Zn(2+). Residues 27–49 form a C4-type zinc finger; it reads CDSCGQVLYRAELERNLEVCPKC. Positions 285-304 are disordered; it reads PEAPREGVVVPPVPDQEPEA. Pro residues predominate over residues 295-304; that stretch reads PPVPDQEPEA.

It belongs to the AccD/PCCB family. In terms of assembly, acetyl-CoA carboxylase is a heterohexamer composed of biotin carboxyl carrier protein (AccB), biotin carboxylase (AccC) and two subunits each of ACCase subunit alpha (AccA) and ACCase subunit beta (AccD). Zn(2+) serves as cofactor.

It is found in the cytoplasm. The catalysed reaction is N(6)-carboxybiotinyl-L-lysyl-[protein] + acetyl-CoA = N(6)-biotinyl-L-lysyl-[protein] + malonyl-CoA. Its pathway is lipid metabolism; malonyl-CoA biosynthesis; malonyl-CoA from acetyl-CoA: step 1/1. Component of the acetyl coenzyme A carboxylase (ACC) complex. Biotin carboxylase (BC) catalyzes the carboxylation of biotin on its carrier protein (BCCP) and then the CO(2) group is transferred by the transcarboxylase to acetyl-CoA to form malonyl-CoA. This Shigella sonnei (strain Ss046) protein is Acetyl-coenzyme A carboxylase carboxyl transferase subunit beta.